A 163-amino-acid polypeptide reads, in one-letter code: Disulfide bond formation protein B (163 aa).

The Cytoplasmic portion of the chain corresponds to 1–9 (MRLASPRSL). A helical transmembrane segment spans residues 10–26 (FVIAFLGSALLIAIALY). Residues 27-44 (MEHVMGLAPCPLCIVQRI) are Periplasmic-facing. Cysteine 36 and cysteine 39 are joined by a disulfide. Residues 45-61 (CVIGFGLVCLVAAIHGP) form a helical membrane-spanning segment. Residues 62 to 67 (AKVGRR) lie on the Cytoplasmic side of the membrane. Residues 68 to 85 (VYAAIAALFVAAGAATAI) form a helical membrane-spanning segment. The Periplasmic segment spans residues 86–142 (RQIWLQSVPADQLPSCLPSLEYMMEALPFQEIARLVLHGTAECAEVSWTMLGMSIPE). Cysteines 101 and 128 form a disulfide. The chain crosses the membrane as a helical span at residues 143–161 (WSLLGFIGMAIVCLWQLLR). Over 162-163 (RD) the chain is Cytoplasmic.

The protein belongs to the DsbB family.

The protein resides in the cell inner membrane. Required for disulfide bond formation in some periplasmic proteins. Acts by oxidizing the DsbA protein. The chain is Disulfide bond formation protein B from Stutzerimonas stutzeri (strain A1501) (Pseudomonas stutzeri).